A 283-amino-acid chain; its full sequence is Polyamine aminopropyltransferase (283 aa).

The region spanning 5-238 (TTWIDEYQKG…GIWSWTFASK (234 aa)) is the PABS domain. Residue Gln-32 participates in S-methyl-5'-thioadenosine binding. 2 residues coordinate spermidine: His-63 and Asp-87. Residues Glu-107 and 139–140 (DG) contribute to the S-methyl-5'-thioadenosine site. Catalysis depends on Asp-158, which acts as the Proton acceptor. Spermidine is bound at residue 158–161 (DCSD).

This sequence belongs to the spermidine/spermine synthase family. As to quaternary structure, homodimer or homotetramer.

The protein resides in the cytoplasm. The catalysed reaction is S-adenosyl 3-(methylsulfanyl)propylamine + putrescine = S-methyl-5'-thioadenosine + spermidine + H(+). It functions in the pathway amine and polyamine biosynthesis; spermidine biosynthesis; spermidine from putrescine: step 1/1. Functionally, catalyzes the irreversible transfer of a propylamine group from the amino donor S-adenosylmethioninamine (decarboxy-AdoMet) to putrescine (1,4-diaminobutane) to yield spermidine. In Prochlorococcus marinus (strain MIT 9515), this protein is Polyamine aminopropyltransferase.